A 109-amino-acid polypeptide reads, in one-letter code: Small ribosomal subunit protein uS17 (109 aa).

It belongs to the universal ribosomal protein uS17 family. As to quaternary structure, part of the 30S ribosomal subunit.

One of the primary rRNA binding proteins, it binds specifically to the 5'-end of 16S ribosomal RNA. In Methanosarcina mazei (strain ATCC BAA-159 / DSM 3647 / Goe1 / Go1 / JCM 11833 / OCM 88) (Methanosarcina frisia), this protein is Small ribosomal subunit protein uS17.